A 202-amino-acid chain; its full sequence is LexA repressor (202 aa).

Residues 28–48 (RAEIAAQLGFRSPNAAEEHLK) constitute a DNA-binding region (H-T-H motif). Residues S119 and K156 each act as for autocatalytic cleavage activity in the active site.

Belongs to the peptidase S24 family. In terms of assembly, homodimer.

The enzyme catalyses Hydrolysis of Ala-|-Gly bond in repressor LexA.. Its function is as follows. Represses a number of genes involved in the response to DNA damage (SOS response), including recA and lexA. Binds to the 16 bp palindromic sequence 5'-CTGTATATATATACAG-3'. In the presence of single-stranded DNA, RecA interacts with LexA causing an autocatalytic cleavage which disrupts the DNA-binding part of LexA, leading to derepression of the SOS regulon and eventually DNA repair. The protein is LexA repressor of Erwinia tasmaniensis (strain DSM 17950 / CFBP 7177 / CIP 109463 / NCPPB 4357 / Et1/99).